We begin with the raw amino-acid sequence, 219 residues long: Response regulator ArlR (219 aa).

One can recognise a Response regulatory domain in the interval 3 to 116 (NILIVEDEQN…ELFARIRAVL (114 aa)). At D52 the chain carries 4-aspartylphosphate. Positions 122 to 219 (KDIIDINGIK…TVRGVGYVIR (98 aa)) form a DNA-binding region, ompR/PhoB-type.

In terms of processing, phosphorylated by ArlS.

Its subcellular location is the cytoplasm. Functionally, member of the two-component regulatory system ArlS/ArlR. This Staphylococcus haemolyticus (strain JCSC1435) protein is Response regulator ArlR (arlR).